We begin with the raw amino-acid sequence, 620 residues long: MVYDIEYDVVVIGGGHAGIEAALASAKLGTKTALITIDKEKIGLMPCNPSIGGIAKGIVVREVDALGGEMAKAIDQTGIQFKVLNTRKGPAVRSPRAQADKEEYRKYMVNKTNNTENLTVIEDEVIDIVLKENKNEVDGVITDKGLKIKTKAVVVTTGTFLNGLIHIGDKRFPAGRMEEKPSTKLPEFYKRAGFELFRFKTGTPARLDKNTINFSILEEAPGDNPPPKFSFWTEPKGSYWFKEKDQIPCYITYTTPETHRIIKENLHRTALYGGAITGIGPRYCPSVEDKIVKFEGKDRHTVWLEPETRDGISIYPNGLSTSLSEEIQWQMYRSIPGLENVVLLKPAYAIEYDIVMPTELYPTLETKRIRGLYHAGNFNGTTGYEEAAGQGIVAGINAALRALGKDEPFIIRRDEAYIGVMIDDLTTKGVIEPYRLFTSRSEYRLHLRQDNAILRLYQKAYNIGMLNEEEYKFVKETEEEIKNWINIYKETFIKDGDKKVSIFTYLQKPEVDIQKLKEMGIAVPESDYIQEEIEINVKYDGYLEREEKLNEKMKYLEGIKIPEDIDYSQVAGLRKEIVQKLTKFKPMTLGQASRLEGITPAAITALLVHIEKMREKRKTG.

FAD is bound by residues 13–18, Val125, and Ser182; that span reads GGGHAG. 280–294 contacts NAD(+); the sequence is GPRYCPSVEDKIVKF. Asn377 contributes to the FAD binding site.

The protein belongs to the MnmG family. As to quaternary structure, homodimer. Heterotetramer of two MnmE and two MnmG subunits. The cofactor is FAD.

It localises to the cytoplasm. Its function is as follows. NAD-binding protein involved in the addition of a carboxymethylaminomethyl (cmnm) group at the wobble position (U34) of certain tRNAs, forming tRNA-cmnm(5)s(2)U34. The polypeptide is tRNA uridine 5-carboxymethylaminomethyl modification enzyme MnmG (Sulfurihydrogenibium sp. (strain YO3AOP1)).